A 91-amino-acid polypeptide reads, in one-letter code: Small ribosomal subunit protein uS19 (91 aa).

It belongs to the universal ribosomal protein uS19 family.

In terms of biological role, protein S19 forms a complex with S13 that binds strongly to the 16S ribosomal RNA. The polypeptide is Small ribosomal subunit protein uS19 (Ralstonia nicotianae (strain ATCC BAA-1114 / GMI1000) (Ralstonia solanacearum)).